The following is a 730-amino-acid chain: Replication restart protein PriA (730 aa).

The region spanning 212–378 (LLFHSGFNVW…QNGKYQHLVL (167 aa)) is the Helicase ATP-binding domain. 225–232 (GVTGSGKT) lines the ATP pocket. Residues 321-324 (DEEH) carry the DEAH box motif. C437, C440, C446, C449, C464, C467, C477, and C480 together coordinate Zn(2+). In terms of domain architecture, Helicase C-terminal spans 472-640 (TIPRQCGDCG…LPPFTFQALI (169 aa)).

The protein belongs to the helicase family. PriA subfamily. In terms of assembly, component of the replication restart primosome. Zn(2+) serves as cofactor.

It catalyses the reaction Couples ATP hydrolysis with the unwinding of duplex DNA by translocating in the 3'-5' direction.. The catalysed reaction is ATP + H2O = ADP + phosphate + H(+). Initiates the restart of stalled replication forks, which reloads the replicative helicase on sites other than the origin of replication. Recognizes and binds to abandoned replication forks and remodels them to uncover a helicase loading site. Promotes assembly of the primosome at these replication forks. This chain is Replication restart protein PriA, found in Haemophilus influenzae (strain ATCC 51907 / DSM 11121 / KW20 / Rd).